The chain runs to 175 residues: MAQSQSWARRCFKAFCKGFFVAVPVAVTFLDRVACVARVEGSSMQPSLNPGGSQSSDVVLLNHWKVRNFEVQRGDIVSLVSPKNPEQKIIKRVIALEGDIVRTIGHKNRLVKVPRGHMWVEGDHHGHSFDSNSFGPVSLGLLHAHATHILWPPERWQRLESVLPPERCPLQTGEK.

Residues 19–37 (FFVAVPVAVTFLDRVACVA) traverse the membrane as a helical segment. Active-site residues include S43 and K91.

It belongs to the peptidase S26 family. IMP2 subfamily. As to quaternary structure, heterodimer of 2 subunits, IMMPL1 and IMMPL2.

It is found in the mitochondrion inner membrane. Catalyzes the removal of transit peptides required for the targeting of proteins from the mitochondrial matrix, across the inner membrane, into the inter-membrane space. Known to process the nuclear encoded protein DIABLO. The sequence is that of Mitochondrial inner membrane protease subunit 2 (Immp2l) from Mus musculus (Mouse).